A 1330-amino-acid polypeptide reads, in one-letter code: ESX-3 secretion system protein EccC3 (1330 aa).

2 helical membrane passes run 43–63 and 65–85; these read LPYLIGILIVGMIVALVATGM and VISPQTLFFPFVLLLAATALY. 3 FtsK domains span residues 456-662, 811-1000, and 1090-1280; these read GEPL…SVSR, RDPL…RDSN, and LAPV…ADSG. ATP-binding positions include 479 to 486, 829 to 836, and 1107 to 1114; these read GMTGSGKS, GGPKSGKS, and GDARSGKT.

In terms of assembly, part of the ESX-3 / type VII secretion system (T7SS), which is composed of cytosolic and membrane components. The ESX-3 membrane complex is composed of EccB3, EccC3, EccD3 and EccE3.

It localises to the cell inner membrane. In terms of biological role, part of the ESX-3 specialized secretion system, which is important for iron and zinc uptake or homeostasis. This Mycobacterium tuberculosis (strain ATCC 25618 / H37Rv) protein is ESX-3 secretion system protein EccC3.